Reading from the N-terminus, the 86-residue chain is Large ribosomal subunit protein bL31 (86 aa).

The tract at residues 65–86 (YGMGSANSATSKEQKEEKDSKK) is disordered. The span at 76–86 (KEQKEEKDSKK) shows a compositional bias: basic and acidic residues.

Belongs to the bacterial ribosomal protein bL31 family. Type A subfamily. Part of the 50S ribosomal subunit.

Functionally, binds the 23S rRNA. This is Large ribosomal subunit protein bL31 from Prochlorococcus marinus (strain AS9601).